The following is a 910-amino-acid chain: DNA mismatch repair protein MutS (910 aa).

Residues Met1–Gly15 show a composition bias toward polar residues. The interval Met1 to Val94 is disordered. Positions Asp44–Arg54 are enriched in low complexity. ATP is bound at residue Gly726–Ser733.

It belongs to the DNA mismatch repair MutS family.

Functionally, this protein is involved in the repair of mismatches in DNA. It is possible that it carries out the mismatch recognition step. This protein has a weak ATPase activity. The polypeptide is DNA mismatch repair protein MutS (Synechococcus sp. (strain WH7803)).